A 310-amino-acid polypeptide reads, in one-letter code: Putative sugar kinase PH1459 (310 aa).

Lysine 194, threonine 219, and glycine 224 together coordinate ATP.

The protein belongs to the carbohydrate kinase PfkB family.

The chain is Putative sugar kinase PH1459 from Pyrococcus horikoshii (strain ATCC 700860 / DSM 12428 / JCM 9974 / NBRC 100139 / OT-3).